Reading from the N-terminus, the 62-residue chain is Large ribosomal subunit protein uL15 (62 aa).

It belongs to the universal ribosomal protein uL15 family.

In Candida albicans (Yeast), this protein is Large ribosomal subunit protein uL15 (RPL28).